Here is a 938-residue protein sequence, read N- to C-terminus: Myocardin (938 aa).

Positions 12 to 27 match the MEF2C-binding motif; that stretch reads IRRKFRSVLQLRLQQR. RPEL repeat units follow at residues 18–43, 62–87, and 106–131; these read SVLQ…PPLK, DSLR…QAST, and DDLN…PMDS. Residues 37 to 64 are disordered; the sequence is GLIPPLKSPTEFHDPRKKLDSAKTEDSL. Residues 46-64 show a composition bias toward basic and acidic residues; that stretch reads TEFHDPRKKLDSAKTEDSL. Residues 153-205 form an HDAC5-binding region; that stretch reads FEDDSSRDGLSPDQARSEDPQGSGGSTPDIKSTEAPLAGPLDTIQDLTPGSES. 2 disordered regions span residues 155-282 and 339-381; these read DDSS…PPPM and NEQM…PLPP. The segment covering 210-221 has biased composition (polar residues); the sequence is TASQLSNQSDSG. Over residues 248–265 the composition is skewed to basic residues; sequence NRHKKPKDPKPKVKKLKY. Residues 345–360 are compositionally biased toward low complexity; that stretch reads NPNSSSTPLNNTPLSP. Residues 361 to 372 are compositionally biased toward polar residues; that stretch reads VKNSLSGQTGVS. Residues 383–417 form the SAP domain; that stretch reads LDDLKVSELRQQLRIRGLPVSGTKTALVDRLRPFQ. Ser-457, Ser-461, Ser-465, and Ser-469 each carry phosphoserine; by GSK3-beta. The segment at 501-521 is disordered; it reads ESLLSSLNGGSGPSEPDGLDS. Residues 522 to 566 are a coiled coil; the sequence is EKDKMLVEKQKVINQLTWKLRQEQRQVEELRMQLQKQKSGCNDQK. The tract at residues 586-606 is disordered; sequence AAQQASGKGQGHSSDSPPPAC. Polar residues predominate over residues 588-600; the sequence is QQASGKGQGHSSD. Residues Ser-627, Ser-631, Ser-635, and Ser-639 each carry the phosphoserine; by GSK3-beta modification. 2 stretches are compositionally biased toward polar residues: residues 667–694 and 701–713; these read GAQR…QSSD and SIPS…SSPT. The interval 667 to 734 is disordered; that stretch reads GAQRENHGVS…DAVKQQMTRS (68 aa). The tract at residues 717–938 is required for interaction with and ubiquitination by STUB1; it reads ITQPPSYEDA…SPMDLHLQQW (222 aa). Ser-815, Ser-862, and Ser-869 each carry phosphoserine; by MAPK1 and MAPK3. Thr-896 carries the post-translational modification Phosphothreonine; by MAPK1 and MAPK3.

In terms of assembly, homodimer. Interacts with MLLT7/FOXO4. Interacts with SRF, its association does not depend on specific DNA sequences for ternary complex formation. Interacts (via C-terminal) with EP300 (via the CREB-binding domain). Interacts with HDAC4 and HDAC5. Interacts with MEF2C. Interacts (via C-terminus) with STUB1/CHIP. Interacts with PURB. In terms of processing, ubiquitinated; by STUB1/CHIP at the C-terminus, leading to its degradation by the proteasome. Phosphorylation by GSK3B is required for STUB1/CHIP-mediated ubiquitination. Post-translationally, phosphorylation negatively regulates transcriptional activity. Phosphorylated; by GSK3B. Abundantly expressed in the heart, aorta media and bladder, weakly expressed in the stomach, intestine and lung.

The protein localises to the nucleus. In terms of biological role, smooth muscle cells (SM) and cardiac muscle cells-specific transcriptional factor which uses the canonical single or multiple CArG boxes DNA sequence. Acts as a cofactor of serum response factor (SRF) with the potential to modulate SRF-target genes. Plays a crucial role in cardiogenesis, urinary bladder development, and differentiation of the smooth muscle cell lineage (myogenesis). Positively regulates the transcription of genes involved in vascular smooth muscle contraction. In Rattus norvegicus (Rat), this protein is Myocardin (Myocd).